Here is a 107-residue protein sequence, read N- to C-terminus: Iron-sulfur cluster assembly protein CyaY (107 aa).

Belongs to the frataxin family.

Involved in iron-sulfur (Fe-S) cluster assembly. May act as a regulator of Fe-S biogenesis. The polypeptide is Iron-sulfur cluster assembly protein CyaY (Edwardsiella ictaluri (strain 93-146)).